A 100-amino-acid polypeptide reads, in one-letter code: Nucleoid-associated protein Caur_0522 (100 aa).

This sequence belongs to the YbaB/EbfC family. As to quaternary structure, homodimer.

The protein resides in the cytoplasm. It localises to the nucleoid. Binds to DNA and alters its conformation. May be involved in regulation of gene expression, nucleoid organization and DNA protection. This chain is Nucleoid-associated protein Caur_0522, found in Chloroflexus aurantiacus (strain ATCC 29366 / DSM 635 / J-10-fl).